Here is a 157-residue protein sequence, read N- to C-terminus: uncharacterized protein (157 aa).

Residues 9–146 (LLINYKTLDE…GDFYVWHPET (138 aa)) enclose the N-acetyltransferase domain.

This is an uncharacterized protein from Bacillus cereus (strain ATCC 10987 / NRS 248).